The sequence spans 179 residues: Pyridoxal 5'-phosphate synthase subunit PdxT (179 aa).

48–50 (GES) serves as a coordination point for L-glutamine. The Nucleophile role is filled by Cys79. L-glutamine is bound by residues Arg101 and 127 to 128 (IR). Catalysis depends on charge relay system residues His163 and Glu165.

Belongs to the glutaminase PdxT/SNO family. As to quaternary structure, in the presence of PdxS, forms a dodecamer of heterodimers. Only shows activity in the heterodimer.

The catalysed reaction is aldehydo-D-ribose 5-phosphate + D-glyceraldehyde 3-phosphate + L-glutamine = pyridoxal 5'-phosphate + L-glutamate + phosphate + 3 H2O + H(+). The enzyme catalyses L-glutamine + H2O = L-glutamate + NH4(+). The protein operates within cofactor biosynthesis; pyridoxal 5'-phosphate biosynthesis. Its function is as follows. Catalyzes the hydrolysis of glutamine to glutamate and ammonia as part of the biosynthesis of pyridoxal 5'-phosphate. The resulting ammonia molecule is channeled to the active site of PdxS. In Francisella tularensis subsp. tularensis (strain FSC 198), this protein is Pyridoxal 5'-phosphate synthase subunit PdxT.